Here is a 1135-residue protein sequence, read N- to C-terminus: uncharacterized protein (1135 aa).

Residues 1–28 form the signal peptide; that stretch reads MALFPRGILIALVLSFVLNLGLVTKIHA. The next 7 helical transmembrane spans lie at 332-352, 359-379, 393-413, 495-515, 522-542, 555-575, and 700-720; these read IVTA…LLAG, EYIN…GINI, MIQW…NWVM, MLVS…AFMV, MISI…FLFA, MISF…MFAV, and IKNI…MYNF.

Belongs to the TrbL/VirB6 family.

The protein localises to the cell membrane. This is an uncharacterized protein from Rickettsia typhi (strain ATCC VR-144 / Wilmington).